The chain runs to 432 residues: Gamma-glutamyl phosphate reductase (432 aa).

It belongs to the gamma-glutamyl phosphate reductase family.

The protein localises to the cytoplasm. The enzyme catalyses L-glutamate 5-semialdehyde + phosphate + NADP(+) = L-glutamyl 5-phosphate + NADPH + H(+). Its pathway is amino-acid biosynthesis; L-proline biosynthesis; L-glutamate 5-semialdehyde from L-glutamate: step 2/2. Its function is as follows. Catalyzes the NADPH-dependent reduction of L-glutamate 5-phosphate into L-glutamate 5-semialdehyde and phosphate. The product spontaneously undergoes cyclization to form 1-pyrroline-5-carboxylate. This chain is Gamma-glutamyl phosphate reductase, found in Clavibacter michiganensis subsp. michiganensis (strain NCPPB 382).